The primary structure comprises 184 residues: Photosystem I assembly protein Ycf4 (184 aa).

A run of 2 helical transmembrane segments spans residues 21–43 (NFCW…TSSY) and 58–80 (IFFP…SSYL).

It belongs to the Ycf4 family.

It localises to the plastid. It is found in the chloroplast thylakoid membrane. In terms of biological role, seems to be required for the assembly of the photosystem I complex. The protein is Photosystem I assembly protein Ycf4 of Calycanthus floridus var. glaucus (Eastern sweetshrub).